Reading from the N-terminus, the 281-residue chain is D-arabinitol 2-dehydrogenase [ribulose-forming] (281 aa).

L31 and N52 together coordinate NADP(+). The active-site Proton donor is S169. 4 residues coordinate NADP(+): Y184, K188, I217, and T219. Y184 (proton acceptor) is an active-site residue. Catalysis depends on K188, which acts as the Lowers pKa of active site Tyr.

Belongs to the short-chain dehydrogenases/reductases (SDR) family.

It carries out the reaction D-arabinitol + NAD(+) = D-ribulose + NADH + H(+). It functions in the pathway carbohydrate metabolism; D-arabinitol metabolism. The chain is D-arabinitol 2-dehydrogenase [ribulose-forming] (ARD1) from Candida albicans (strain WO-1) (Yeast).